A 537-amino-acid polypeptide reads, in one-letter code: Tyrosine-protein kinase Fyn (537 aa).

Glycine 2 carries N-myristoyl glycine lipidation. 2 S-palmitoyl cysteine lipidation sites follow: cysteine 3 and cysteine 6. Threonine 12 bears the Phosphothreonine; by PKC mark. Residues 14–35 form a disordered region; it reads LTEERDGSLNQSSGYRYGTDPT. Serine 21 and serine 26 each carry phosphoserine. The SH3 domain maps to 82–143; the sequence is TGVTLFVALY…PSNYVAPVDS (62 aa). Residues 149-246 form the SH2 domain; the sequence is WYFGKLGRKD…GLCCRLVVPC (98 aa). The residue at position 185 (tyrosine 185) is a Phosphotyrosine. Residues 271–524 enclose the Protein kinase domain; it reads LQLIKRLGNG…YLQSFLEDYF (254 aa). ATP is bound by residues 277 to 285 and lysine 299; that span reads LGNGQFGEV. The active-site Proton acceptor is aspartate 390. A Phosphotyrosine; by autocatalysis modification is found at tyrosine 420. Tyrosine 531 carries the phosphotyrosine; by CSK modification.

Belongs to the protein kinase superfamily. Tyr protein kinase family. SRC subfamily. Interacts (via its SH3 domain) with PIK3R1 and PRMT8. Interacts with FYB1, PAG1, and SH2D1A. Interacts with CD79A (tyrosine-phosphorylated form); the interaction increases FYN activity. Interacts (via SH2 domain) with CSF1R (tyrosine phosphorylated). Interacts with TOM1L1 (phosphorylated form). Interacts with KDR (tyrosine phosphorylated). Interacts (via SH3 domain) with KLHL2 (via N-terminus). Interacts with SH2D1A and SLAMF1. Interacts with ITCH; the interaction phosphorylates ITCH and negatively regulates its activity. Interacts with FASLG. Interacts with RUNX3. Interacts with KIT. Interacts with EPHA8; possible downstream effector of EPHA8 in regulation of cell adhesion. Interacts with PTK2/FAK1; this interaction leads to PTK2/FAK1 phosphorylation and activation. Interacts with CAV1; this interaction couples integrins to the Ras-ERK pathway. Interacts with UNC119. Interacts (via SH2 domain) with PTPRH (phosphorylated form). Interacts with PTPRO (phosphorylated form). Interacts with PTPRB (phosphorylated form). Interacts with FYB2. Interacts with DSCAM. Interacts with SKAP1 and FYB1; this interaction promotes the phosphorylation of CLNK. Interacts with NEDD9; in the presence of PTK2. In terms of assembly, (Microbial infection) Interacts (via its SH3 domain) with hepatitis E virus/HEV protein ORF3. The cofactor is Mn(2+). Autophosphorylated at Tyr-420. Phosphorylation on the C-terminal tail at Tyr-531 by CSK maintains the enzyme in an inactive state. PTPRC/CD45 dephosphorylates Tyr-531 leading to activation. Ultraviolet B (UVB) strongly increase phosphorylation at Thr-12 and kinase activity, and promotes translocation from the cytoplasm to the nucleus. Dephosphorylation at Tyr-420 by PTPN2 negatively regulates T-cell receptor signaling. Phosphorylated at tyrosine residues, which can be enhanced by NTN1. Post-translationally, palmitoylated. Palmitoylation at Cys-3 and Cys-6, probably by ZDHHC21, regulates subcellular location. In terms of tissue distribution, isoform 1 is highly expressed in the brain. Isoform 2 is expressed in cells of hemopoietic lineages, especially T-lymphocytes.

It is found in the cytoplasm. Its subcellular location is the nucleus. It localises to the cell membrane. The protein resides in the perikaryon. It catalyses the reaction L-tyrosyl-[protein] + ATP = O-phospho-L-tyrosyl-[protein] + ADP + H(+). With respect to regulation, inhibited by phosphorylation of Tyr-531 by leukocyte common antigen and activated by dephosphorylation of this site. Its function is as follows. Non-receptor tyrosine-protein kinase that plays a role in many biological processes including regulation of cell growth and survival, cell adhesion, integrin-mediated signaling, cytoskeletal remodeling, cell motility, immune response and axon guidance. Inactive FYN is phosphorylated on its C-terminal tail within the catalytic domain. Following activation by PKA, the protein subsequently associates with PTK2/FAK1, allowing PTK2/FAK1 phosphorylation, activation and targeting to focal adhesions. Involved in the regulation of cell adhesion and motility through phosphorylation of CTNNB1 (beta-catenin) and CTNND1 (delta-catenin). Regulates cytoskeletal remodeling by phosphorylating several proteins including the actin regulator WAS and the microtubule-associated proteins MAP2 and MAPT. Promotes cell survival by phosphorylating AGAP2/PIKE-A and preventing its apoptotic cleavage. Participates in signal transduction pathways that regulate the integrity of the glomerular slit diaphragm (an essential part of the glomerular filter of the kidney) by phosphorylating several slit diaphragm components including NPHS1, KIRREL1 and TRPC6. Plays a role in neural processes by phosphorylating DPYSL2, a multifunctional adapter protein within the central nervous system, ARHGAP32, a regulator for Rho family GTPases implicated in various neural functions, and SNCA, a small pre-synaptic protein. Involved in reelin signaling by mediating phosphorylation of DAB1 following reelin (RELN)-binding to its receptor. Participates in the downstream signaling pathways that lead to T-cell differentiation and proliferation following T-cell receptor (TCR) stimulation. Phosphorylates PTK2B/PYK2 in response to T-cell receptor activation. Also participates in negative feedback regulation of TCR signaling through phosphorylation of PAG1, thereby promoting interaction between PAG1 and CSK and recruitment of CSK to lipid rafts. CSK maintains LCK and FYN in an inactive form. Promotes CD28-induced phosphorylation of VAV1. In mast cells, phosphorylates CLNK after activation of immunoglobulin epsilon receptor signaling. Can also promote CD244-mediated NK cell activation. The sequence is that of Tyrosine-protein kinase Fyn (FYN) from Homo sapiens (Human).